A 210-amino-acid chain; its full sequence is PEP-dependent dihydroxyacetone kinase, ADP-binding subunit DhaL (210 aa).

In terms of domain architecture, DhaL spans 6–206 (TQIVNWLTRC…VMFMMQMLAL (201 aa)). Residues aspartate 30, aspartate 35, and aspartate 37 each contribute to the Mg(2+) site. Residues 38-41 (HGLN), 79-80 (AS), glycine 121, methionine 130, arginine 178, and 191-193 (DPG) each bind ADP.

Homodimer. The dihydroxyacetone kinase complex is composed of a homodimer of DhaM, a homodimer of DhaK and the subunit DhaL. DhaL also forms a complex with DhaR. It depends on Mg(2+) as a cofactor.

It is found in the cytoplasm. The enzyme catalyses dihydroxyacetone + phosphoenolpyruvate = dihydroxyacetone phosphate + pyruvate. Its pathway is polyol metabolism; glycerol degradation. Its function is as follows. ADP-binding subunit of the dihydroxyacetone kinase, which is responsible for the phosphoenolpyruvate (PEP)-dependent phosphorylation of dihydroxyacetone. DhaL-ADP is converted to DhaL-ATP via a phosphoryl group transfer from DhaM and transmits it to dihydroxyacetone bound to DhaK. DhaL also acts as coactivator of the transcription activator DhaR by binding to the sensor domain of DhaR. In the presence of dihydroxyacetone, DhaL-ADP displaces DhaK and stimulates DhaR activity. In the absence of dihydroxyacetone, DhaL-ADP is converted by the PTS to DhaL-ATP, which does not bind to DhaR. The protein is PEP-dependent dihydroxyacetone kinase, ADP-binding subunit DhaL of Escherichia coli (strain K12).